A 227-amino-acid chain; its full sequence is ATP synthase F(0) complex subunit a (227 aa).

The next 6 membrane-spanning stretches (helical) occupy residues 14 to 34, 73 to 93, 98 to 118, 137 to 157, 179 to 199, and 203 to 223; these read FLGI…IPTP, LASL…PYIF, QLSL…LIGM, ALIP…PLAL, VFVL…LLLL, and LEVA…SLYL.

Belongs to the ATPase A chain family. In terms of assembly, component of the ATP synthase complex composed at least of ATP5F1A/subunit alpha, ATP5F1B/subunit beta, ATP5MC1/subunit c (homooctomer), MT-ATP6/subunit a, MT-ATP8/subunit 8, ATP5ME/subunit e, ATP5MF/subunit f, ATP5MG/subunit g, ATP5MK/subunit k, ATP5MJ/subunit j, ATP5F1C/subunit gamma, ATP5F1D/subunit delta, ATP5F1E/subunit epsilon, ATP5PF/subunit F6, ATP5PB/subunit b, ATP5PD/subunit d, ATP5PO/subunit OSCP. ATP synthase complex consists of a soluble F(1) head domain (subunits alpha(3) and beta(3)) - the catalytic core - and a membrane F(0) domain - the membrane proton channel (subunits c, a, 8, e, f, g, k and j). These two domains are linked by a central stalk (subunits gamma, delta, and epsilon) rotating inside the F1 region and a stationary peripheral stalk (subunits F6, b, d, and OSCP). Interacts with DNAJC30; interaction is direct.

The protein resides in the mitochondrion inner membrane. The enzyme catalyses H(+)(in) = H(+)(out). Subunit a, of the mitochondrial membrane ATP synthase complex (F(1)F(0) ATP synthase or Complex V) that produces ATP from ADP in the presence of a proton gradient across the membrane which is generated by electron transport complexes of the respiratory chain. ATP synthase complex consist of a soluble F(1) head domain - the catalytic core - and a membrane F(1) domain - the membrane proton channel. These two domains are linked by a central stalk rotating inside the F(1) region and a stationary peripheral stalk. During catalysis, ATP synthesis in the catalytic domain of F(1) is coupled via a rotary mechanism of the central stalk subunits to proton translocation. With the subunit c (ATP5MC1), forms the proton-conducting channel in the F(0) domain, that contains two crucial half-channels (inlet and outlet) that facilitate proton movement from the mitochondrial intermembrane space (IMS) into the matrix. Protons are taken up via the inlet half-channel and released through the outlet half-channel, following a Grotthuss mechanism. This Gadus morhua (Atlantic cod) protein is ATP synthase F(0) complex subunit a.